The primary structure comprises 428 residues: Serine--tRNA ligase (428 aa).

231 to 233 (TAE) contributes to the L-serine binding site. Residues 262-264 (RRE) and Val-278 each bind ATP. Residue Glu-285 participates in L-serine binding. 349–352 (EVSS) is an ATP binding site. L-serine is bound at residue Ser-384.

Belongs to the class-II aminoacyl-tRNA synthetase family. Type-1 seryl-tRNA synthetase subfamily. As to quaternary structure, homodimer. The tRNA molecule binds across the dimer.

The protein localises to the cytoplasm. The enzyme catalyses tRNA(Ser) + L-serine + ATP = L-seryl-tRNA(Ser) + AMP + diphosphate + H(+). It catalyses the reaction tRNA(Sec) + L-serine + ATP = L-seryl-tRNA(Sec) + AMP + diphosphate + H(+). It participates in aminoacyl-tRNA biosynthesis; selenocysteinyl-tRNA(Sec) biosynthesis; L-seryl-tRNA(Sec) from L-serine and tRNA(Sec): step 1/1. In terms of biological role, catalyzes the attachment of serine to tRNA(Ser). Is also able to aminoacylate tRNA(Sec) with serine, to form the misacylated tRNA L-seryl-tRNA(Sec), which will be further converted into selenocysteinyl-tRNA(Sec). The protein is Serine--tRNA ligase of Chlamydia trachomatis serovar A (strain ATCC VR-571B / DSM 19440 / HAR-13).